The chain runs to 289 residues: Acetyl-coenzyme A carboxylase carboxyl transferase subunit beta (289 aa).

In terms of domain architecture, CoA carboxyltransferase N-terminal spans valine 28–serine 289. Residues cysteine 32, cysteine 35, cysteine 51, and cysteine 54 each coordinate Zn(2+). The C4-type zinc-finger motif lies at cysteine 32–cysteine 54.

The protein belongs to the AccD/PCCB family. In terms of assembly, acetyl-CoA carboxylase is a heterohexamer composed of biotin carboxyl carrier protein (AccB), biotin carboxylase (AccC) and two subunits each of ACCase subunit alpha (AccA) and ACCase subunit beta (AccD). Requires Zn(2+) as cofactor.

Its subcellular location is the cytoplasm. The enzyme catalyses N(6)-carboxybiotinyl-L-lysyl-[protein] + acetyl-CoA = N(6)-biotinyl-L-lysyl-[protein] + malonyl-CoA. Its pathway is lipid metabolism; malonyl-CoA biosynthesis; malonyl-CoA from acetyl-CoA: step 1/1. Functionally, component of the acetyl coenzyme A carboxylase (ACC) complex. Biotin carboxylase (BC) catalyzes the carboxylation of biotin on its carrier protein (BCCP) and then the CO(2) group is transferred by the transcarboxylase to acetyl-CoA to form malonyl-CoA. The chain is Acetyl-coenzyme A carboxylase carboxyl transferase subunit beta from Bacillus thuringiensis subsp. konkukian (strain 97-27).